The chain runs to 535 residues: Nuclear/nucleolar GTPase 2 (535 aa).

The tract at residues 1–42 (MAKKKERAVNVSGKPRHSLDVNRANDKKGAGGGAGGGGGGRS) is disordered. Over residues 17–29 (HSLDVNRANDKKG) the composition is skewed to basic and acidic residues. Gly residues predominate over residues 30–41 (AGGGAGGGGGGR). The CP-type G domain occupies 213–374 (WGELYKVIDS…LIDCPGVVYQ (162 aa)). The G4 stretch occupies residues 261–264 (NKCD). Residues 290–292 (SIN) are G5. Residues 323–330 (GYPNVGKS) are G1. Residues 349 to 353 (GETKV) are G2. Positions 367 to 370 (DCPG) are G3. The disordered stretch occupies residues 464–494 (FFVPPPQQGEDSPSETAEPVEKSDEEGVSSD).

This sequence belongs to the TRAFAC class YlqF/YawG GTPase family. RsgA subfamily. As to quaternary structure, interacts (via N-terminus) with the 60S ribosomal proteins RPL10A. This interaction is enhanced by the addition of GTP. Expressed in roots, shoot apical meristem, leaves, leaf sheaths and flowers.

Its subcellular location is the nucleus. The protein localises to the nucleolus. The GTPase activity is stimulated in the presence of ribosomes, particularly of the 60S subunit. GTPase involved in pre-60S ribosomal subunit maturation. This is Nuclear/nucleolar GTPase 2 from Oryza sativa subsp. japonica (Rice).